Consider the following 118-residue polypeptide: Large ribosomal subunit protein bL19 (118 aa).

The protein belongs to the bacterial ribosomal protein bL19 family.

Its function is as follows. This protein is located at the 30S-50S ribosomal subunit interface and may play a role in the structure and function of the aminoacyl-tRNA binding site. The polypeptide is Large ribosomal subunit protein bL19 (Lactiplantibacillus plantarum (strain ATCC BAA-793 / NCIMB 8826 / WCFS1) (Lactobacillus plantarum)).